A 59-amino-acid polypeptide reads, in one-letter code: Large ribosomal subunit protein bL33 (59 aa).

The protein belongs to the bacterial ribosomal protein bL33 family.

This Neorickettsia sennetsu (strain ATCC VR-367 / Miyayama) (Ehrlichia sennetsu) protein is Large ribosomal subunit protein bL33.